The sequence spans 177 residues: Ribosome maturation factor RimM (177 aa).

A PRC barrel domain is found at 98–177 (DDGYYWKDLM…TIEVDWDPGF (80 aa)).

It belongs to the RimM family. In terms of assembly, binds ribosomal protein uS19.

The protein localises to the cytoplasm. An accessory protein needed during the final step in the assembly of 30S ribosomal subunit, possibly for assembly of the head region. Essential for efficient processing of 16S rRNA. May be needed both before and after RbfA during the maturation of 16S rRNA. It has affinity for free ribosomal 30S subunits but not for 70S ribosomes. The chain is Ribosome maturation factor RimM from Enterobacter sp. (strain 638).